The chain runs to 226 residues: MRIAELTALLHLASPALPIGAFSYSQGLEAAIEAQFITDADTACAWIRSGLSNVLAHGELPFLAHQIERWRTHDAAALIEGNREFLASRESAELRRETEQMGWSLRQLCASLEWGDAARRATLASMAPIAQPTAFAFAAIAHDAATDAALAAYAFSWVENQAAAALKAVPLGQLAGQRIIVALREPIDAAVRQALSTSPDDINTFAPQLGILSARHESQYSRLFRS.

The protein belongs to the UreF family. UreD, UreF and UreG form a complex that acts as a GTP-hydrolysis-dependent molecular chaperone, activating the urease apoprotein by helping to assemble the nickel containing metallocenter of UreC. The UreE protein probably delivers the nickel.

The protein resides in the cytoplasm. Required for maturation of urease via the functional incorporation of the urease nickel metallocenter. The protein is Urease accessory protein UreF of Paraburkholderia phymatum (strain DSM 17167 / CIP 108236 / LMG 21445 / STM815) (Burkholderia phymatum).